Reading from the N-terminus, the 57-residue chain is Small ribosomal subunit protein bS21 (57 aa).

It belongs to the bacterial ribosomal protein bS21 family.

The polypeptide is Small ribosomal subunit protein bS21 (Bacillus anthracis (strain A0248)).